The sequence spans 276 residues: uncharacterized protein (276 aa).

The AB hydrolase-1 domain maps to 20–137 (PVLIFIPGAN…PPINTFLPDS (118 aa)). Positions 57 to 76 (GESELTEPLPDSASNPDSDY) are disordered.

This sequence belongs to the AB hydrolase superfamily.

This is an uncharacterized protein from Staphylococcus aureus (strain MW2).